Here is a 123-residue protein sequence, read N- to C-terminus: Large ribosomal subunit protein bL12 (123 aa).

This sequence belongs to the bacterial ribosomal protein bL12 family. Homodimer. Part of the ribosomal stalk of the 50S ribosomal subunit. Forms a multimeric L10(L12)X complex, where L10 forms an elongated spine to which 2 to 4 L12 dimers bind in a sequential fashion. Binds GTP-bound translation factors.

Functionally, forms part of the ribosomal stalk which helps the ribosome interact with GTP-bound translation factors. Is thus essential for accurate translation. The polypeptide is Large ribosomal subunit protein bL12 (Cytophaga hutchinsonii (strain ATCC 33406 / DSM 1761 / CIP 103989 / NBRC 15051 / NCIMB 9469 / D465)).